We begin with the raw amino-acid sequence, 259 residues long: Undecaprenyl-diphosphatase 3 (259 aa).

A run of 8 helical transmembrane segments spans residues 1–21 (MNWL…FLPI), 39–59 (AGLF…FIYY), 71–91 (FSKL…IGLL), 99–119 (ISKT…FLYM), 133–153 (ITYK…FPAI), 174–194 (AYFS…LQFV), 208–228 (SLIV…SWMI), and 239–259 (FAYY…TDVF).

Belongs to the UppP family.

It is found in the cell membrane. It carries out the reaction di-trans,octa-cis-undecaprenyl diphosphate + H2O = di-trans,octa-cis-undecaprenyl phosphate + phosphate + H(+). Catalyzes the dephosphorylation of undecaprenyl diphosphate (UPP). Confers resistance to bacitracin. The chain is Undecaprenyl-diphosphatase 3 from Bacillus cereus (strain ATCC 14579 / DSM 31 / CCUG 7414 / JCM 2152 / NBRC 15305 / NCIMB 9373 / NCTC 2599 / NRRL B-3711).